Consider the following 351-residue polypeptide: Photosystem II D2 protein (351 aa).

The helical transmembrane segment at 39–59 (TAYLAVGGWFTGTTFVTSWYT) threads the bilayer. H116 contributes to the chlorophyll a binding site. Residues 123–139 (GFCLRQFEIARLVGIRP) traverse the membrane as a helical segment. The pheophytin a site is built by Q128 and N141. Residues 151–164 (IFVSVFLLYPLGQA) form a helical membrane-spanning segment. H196 provides a ligand contact to chlorophyll a. The helical transmembrane segment at 206–226 (GALLCAIHGATVENTLFEDGD) threads the bilayer. The a plastoquinone site is built by H213 and F260. H213 provides a ligand contact to Fe cation. H267 contacts Fe cation. A helical membrane pass occupies residues 277 to 293 (GLWTSAIGIVGLALNLR).

It belongs to the reaction center PufL/M/PsbA/D family. In terms of assembly, PSII is composed of 1 copy each of membrane proteins PsbA, PsbB, PsbC, PsbD, PsbE, PsbF, PsbH, PsbI, PsbJ, PsbK, PsbL, PsbM, PsbT, PsbX, PsbY, PsbZ, Psb30/Ycf12, at least 3 peripheral proteins of the oxygen-evolving complex and a large number of cofactors. It forms dimeric complexes. The D1/D2 heterodimer binds P680, chlorophylls that are the primary electron donor of PSII, and subsequent electron acceptors. It shares a non-heme iron and each subunit binds pheophytin, quinone, additional chlorophylls, carotenoids and lipids. There is also a Cl(-1) ion associated with D1 and D2, which is required for oxygen evolution. The PSII complex binds additional chlorophylls, carotenoids and specific lipids. serves as cofactor.

Its subcellular location is the plastid. It localises to the chloroplast thylakoid membrane. The catalysed reaction is 2 a plastoquinone + 4 hnu + 2 H2O = 2 a plastoquinol + O2. Its function is as follows. Photosystem II (PSII) is a light-driven water:plastoquinone oxidoreductase that uses light energy to abstract electrons from H(2)O, generating O(2) and a proton gradient subsequently used for ATP formation. It consists of a core antenna complex that captures photons, and an electron transfer chain that converts photonic excitation into a charge separation. The D1/D2 (PsbA/PsbD) reaction center heterodimer binds P680, the primary electron donor of PSII as well as several subsequent electron acceptors. D2 is needed for assembly of a stable PSII complex. This chain is Photosystem II D2 protein, found in Heterosigma akashiwo (strain NIES-293 / 8280G21-1).